A 1462-amino-acid polypeptide reads, in one-letter code: DNA topoisomerase 2 (1462 aa).

ATP-binding positions include N79, N108, 136-138, and 149-156; these read SSN and GRNGYGAK. Residues 332 to 334 form an interaction with DNA region; that stretch reads NKK. Residue 365–367 participates in ATP binding; it reads QTK. The region spanning 442–556 is the Toprim domain; sequence CTLILTEGDS…SLLKVPSFLV (115 aa). Mg(2+)-binding residues include E448, D525, and D527. A Topo IIA-type catalytic domain is found at 671 to 1131; sequence KDFVNKELIL…PTTSLWLKDL (461 aa). Y761 acts as the O-(5'-phospho-DNA)-tyrosine intermediate in catalysis. The interval 947-956 is interaction with DNA; that stretch reads KLTSTISTSN. Disordered stretches follow at residues 1040–1077 and 1147–1462; these read PMPR…SVSV and EDDR…EDDD. A compositionally biased stretch (acidic residues) spans 1056–1068; the sequence is NDDDSEEQEDAEP. Positions 1167-1181 are enriched in basic residues; sequence PAKKPPQPRKNTKKA. Residues 1198–1207 are compositionally biased toward low complexity; that stretch reads AVEAAKPAEV. Polar residues predominate over residues 1240–1250; the sequence is IESSGEKSQAM. Basic residues predominate over residues 1260–1275; that stretch reads AGKKQNNKRGGAKKKS. Over residues 1282 to 1300 the composition is skewed to acidic residues; that stretch reads SDSDNEVNDVDDDDDDFEE. 2 stretches are compositionally biased toward low complexity: residues 1314–1334 and 1419–1430; these read KPAA…APAA and APQPARARPQRA. Positions 1442 to 1462 are enriched in acidic residues; the sequence is SESEEDSDEDAELSDFEEDDD.

The protein belongs to the type II topoisomerase family. Homodimer. Mg(2+) serves as cofactor. Requires Mn(2+) as cofactor. It depends on Ca(2+) as a cofactor. Abundant in proliferative tissues.

It carries out the reaction ATP-dependent breakage, passage and rejoining of double-stranded DNA.. Control of topological states of DNA by transient breakage and subsequent rejoining of DNA strands. Topoisomerase II makes double-strand breaks. This Pisum sativum (Garden pea) protein is DNA topoisomerase 2 (TOP2).